Reading from the N-terminus, the 114-residue chain is Iron-sulfur cluster insertion protein ErpA (114 aa).

C42, C106, and C108 together coordinate iron-sulfur cluster.

Belongs to the HesB/IscA family. In terms of assembly, homodimer. It depends on iron-sulfur cluster as a cofactor.

Its function is as follows. Required for insertion of 4Fe-4S clusters for at least IspG. This is Iron-sulfur cluster insertion protein ErpA from Salmonella typhi.